A 627-amino-acid chain; its full sequence is Polyadenylate-binding protein, cytoplasmic and nuclear (627 aa).

The segment covering 1 to 11 has biased composition (polar residues); it reads MSAADANQVQE. Residues 1–46 are disordered; that stretch reads MSAADANQVQESLEKLNLDSAPVASTEETEQTASGETEEAADSAQV. RRM domains are found at residues 51–129, 139–216, 232–309, and 335–412; these read ASLY…WSQR, GNIF…KHIS, TNVY…RAQK, and VNLF…LAQR. Residues 511 to 535 show a composition bias toward low complexity; sequence DFNNGANGGRQQRGYYPNRNQNQKG. The segment at 511-537 is disordered; it reads DFNNGANGGRQQRGYYPNRNQNQKGRQ. In terms of domain architecture, PABC spans 537–618; it reads QQKDLAAIIA…ALTAFEEYKK (82 aa).

This sequence belongs to the polyadenylate-binding protein type-1 family.

The protein resides in the cytoplasm. The protein localises to the nucleus. Functionally, binds the poly(A) tail of mRNA. Appears to be an important mediator of the multiple roles of the poly(A) tail in mRNA biogenesis, stability and translation. In the nucleus, involved in both mRNA cleavage and polyadenylation. Is also required for efficient mRNA export to the cytoplasm. Acts in concert with a poly(A)-specific nuclease (PAN) to affect poly(A) tail shortening, which may occur concomitantly with either nucleocytoplasmic mRNA transport or translational initiation. In the cytoplasm, stimulates translation initiation and regulates mRNA decay through translation termination-coupled poly(A) shortening, probably mediated by PAN. In Debaryomyces hansenii (strain ATCC 36239 / CBS 767 / BCRC 21394 / JCM 1990 / NBRC 0083 / IGC 2968) (Yeast), this protein is Polyadenylate-binding protein, cytoplasmic and nuclear (PAB1).